Consider the following 447-residue polypeptide: UDP-N-acetylglucosamine 1-carboxyvinyltransferase (447 aa).

Residue 27–28 coordinates phosphoenolpyruvate; that stretch reads KN. R97 serves as a coordination point for UDP-N-acetyl-alpha-D-glucosamine. Catalysis depends on C121, which acts as the Proton donor. A 2-(S-cysteinyl)pyruvic acid O-phosphothioketal modification is found at C121. UDP-N-acetyl-alpha-D-glucosamine-binding positions include 126 to 130, D314, and V336; that span reads RPVDL.

It belongs to the EPSP synthase family. MurA subfamily.

The protein localises to the cytoplasm. It catalyses the reaction phosphoenolpyruvate + UDP-N-acetyl-alpha-D-glucosamine = UDP-N-acetyl-3-O-(1-carboxyvinyl)-alpha-D-glucosamine + phosphate. Its pathway is cell wall biogenesis; peptidoglycan biosynthesis. Functionally, cell wall formation. Adds enolpyruvyl to UDP-N-acetylglucosamine. This Trichormus variabilis (strain ATCC 29413 / PCC 7937) (Anabaena variabilis) protein is UDP-N-acetylglucosamine 1-carboxyvinyltransferase.